The primary structure comprises 275 residues: Trypsin-3 (275 aa).

A signal peptide spans M1–A22. The propeptide at R23–R48 is activation peptide. Residues I49–G274 enclose the Peptidase S1 domain. The cysteines at positions 74 and 90 are disulfide-linked. Active-site charge relay system residues include H89 and D134. Cystine bridges form between C199/C215 and C226/C250. The active-site Charge relay system is the S230.

It belongs to the peptidase S1 family. As to expression, expressed in the midgut. Expression levels drop a few hours after blood feeding and pick up again 28 hours later.

Its subcellular location is the secreted. The enzyme catalyses Preferential cleavage: Arg-|-Xaa, Lys-|-Xaa.. Its function is as follows. Constitutive trypsin that is expressed 2 days after emergence, coinciding with host seeking behavior of the female. This chain is Trypsin-3 (TRYP3), found in Anopheles gambiae (African malaria mosquito).